A 299-amino-acid polypeptide reads, in one-letter code: Palmitoyltransferase ZDHHC3 (299 aa).

Over 1 to 47 the chain is Cytoplasmic; it reads MMLIPTHHFRDIERKPEYLQPEKCAPPPFPGPVGTMWFIRDGCGIAC. Position 18 is a phosphotyrosine (Tyr18). Residues 48–68 traverse the membrane as a helical segment; the sequence is AIVTWFLVLYAEFVVLFVMLI. The Lumenal segment spans residues 69–72; it reads PSRD. The chain crosses the membrane as a helical span at residues 73-93; the sequence is YAYSIINGIVFNLLAFLALAS. At 94 to 171 the chain is on the cytoplasmic side; the sequence is HCRAMLTDPG…NCVGENNQKY (78 aa). Residues 128-254 enclose the DHHC domain; it reads KCPKCCSIKP…DETGIEQLKK (127 aa). The S-palmitoyl cysteine moiety is linked to residue Cys146. Cys157 serves as the catalytic S-palmitoyl cysteine intermediate. A helical membrane pass occupies residues 172-192; that stretch reads FVLFTMYIALISLHALIMVGF. Residues 193–214 lie on the Lumenal side of the membrane; that stretch reads HFLHCFEEDWTKCSSFSPPTTV. A helical transmembrane segment spans residues 215-235; it reads ILLILLCFEALLFLIFTSVMF. Over 236–299 the chain is Cytoplasmic; that stretch reads GTQVHSICTD…GKADPYQYVV (64 aa).

This sequence belongs to the DHHC palmitoyltransferase family. As to quaternary structure, monomer. Homooligomers. The monomeric form has a higher catalytic activity. Forms heterooligomers with ZDHHC7. Interacts with TNFRSF10A. Phosphorylation by FGFR1 and SRC probably regulates the palmitoyltransferase activity. In terms of processing, autopalmitoylated.

The protein resides in the golgi apparatus membrane. The catalysed reaction is L-cysteinyl-[protein] + hexadecanoyl-CoA = S-hexadecanoyl-L-cysteinyl-[protein] + CoA. It catalyses the reaction L-cysteinyl-[protein] + tetradecanoyl-CoA = S-tetradecanoyl-L-cysteinyl-[protein] + CoA. It carries out the reaction L-cysteinyl-[protein] + octadecanoyl-CoA = S-octadecanoyl-L-cysteinyl-[protein] + CoA. Golgi-localized palmitoyltransferase that catalyzes the addition of palmitate onto various protein substrates. Has no stringent fatty acid selectivity and in addition to palmitate can also transfer onto target proteins myristate from tetradecanoyl-CoA and stearate from octadecanoyl-CoA. Plays an important role in G protein-coupled receptor signaling pathways involving GNAQ and potentially other heterotrimeric G proteins by regulating their dynamic association with the plasma membrane. Palmitoylates ITGA6 and ITGB4, thereby regulating the alpha-6/beta-4 integrin localization, expression and function in cell adhesion to laminin. Plays a role in the TRAIL-activated apoptotic signaling pathway most probably through the palmitoylation and localization to the plasma membrane of TNFRSF10A. In the brain, by palmitoylating the gamma subunit GABRG2 of GABA(A) receptors and regulating their postsynaptic accumulation, plays a role in synaptic GABAergic inhibitory function and GABAergic innervation. Palmitoylates the neuronal protein GAP43 which is also involved in the formation of GABAergic synapses. Palmitoylates NCDN thereby regulating its association with endosome membranes. Probably palmitoylates PRCD and is involved in its proper localization within the photoreceptor. Could mediate the palmitoylation of NCAM1 and regulate neurite outgrowth. Could palmitoylate DNAJC5 and regulate its localization to Golgi membranes. Also constitutively palmitoylates DLG4. May also palmitoylate SNAP25. Could palmitoylate the glutamate receptors GRIA1 and GRIA2 but this has not been confirmed in vivo. Could also palmitoylate the D(2) dopamine receptor DRD2. May also palmitoylate LAMTOR1, promoting its localization to lysosomal membranes. Palmitoylates the Toll-like receptor 9/TLR9 in the Golgi and thereby regulates TLR9 trafficking to endosomes. May palmitoylate CALHM1 and CALHM3 subunits of gustatory voltage-gated ion channels and modulate channel gating and kinetics. The sequence is that of Palmitoyltransferase ZDHHC3 from Rattus norvegicus (Rat).